The following is a 120-amino-acid chain: Aspartate 1-decarboxylase (120 aa).

Ser25 functions as the Schiff-base intermediate with substrate; via pyruvic acid in the catalytic mechanism. Ser25 carries the post-translational modification Pyruvic acid (Ser). Thr57 contributes to the substrate binding site. Tyr58 acts as the Proton donor in catalysis. Gly73 to Ala75 serves as a coordination point for substrate.

Belongs to the PanD family. Heterooctamer of four alpha and four beta subunits. The cofactor is pyruvate. Is synthesized initially as an inactive proenzyme, which is activated by self-cleavage at a specific serine bond to produce a beta-subunit with a hydroxyl group at its C-terminus and an alpha-subunit with a pyruvoyl group at its N-terminus.

Its subcellular location is the cytoplasm. It carries out the reaction L-aspartate + H(+) = beta-alanine + CO2. It functions in the pathway cofactor biosynthesis; (R)-pantothenate biosynthesis; beta-alanine from L-aspartate: step 1/1. In terms of biological role, catalyzes the pyruvoyl-dependent decarboxylation of aspartate to produce beta-alanine. The chain is Aspartate 1-decarboxylase from Ralstonia pickettii (strain 12J).